Here is a 612-residue protein sequence, read N- to C-terminus: UvrABC system protein C (612 aa).

The GIY-YIG domain occupies 20-98 (THSGVYRMLD…IKQHRPKYNI (79 aa)). The UVR domain occupies 208–243 (SSVLEEISAKMYQASEDMEYEKAQVYRDQLVVLRKL).

This sequence belongs to the UvrC family. In terms of assembly, interacts with UvrB in an incision complex.

Its subcellular location is the cytoplasm. The UvrABC repair system catalyzes the recognition and processing of DNA lesions. UvrC both incises the 5' and 3' sides of the lesion. The N-terminal half is responsible for the 3' incision and the C-terminal half is responsible for the 5' incision. The sequence is that of UvrABC system protein C from Francisella tularensis subsp. mediasiatica (strain FSC147).